The sequence spans 213 residues: 3,4-dihydroxy-2-butanone 4-phosphate synthase (213 aa).

D-ribulose 5-phosphate contacts are provided by residues 37–38 (RE), Asp-42, 150–154 (RPGHT), and Glu-174. Glu-38 is a binding site for Mg(2+). His-153 contributes to the Mg(2+) binding site.

It belongs to the DHBP synthase family. Homodimer. Requires Mg(2+) as cofactor. It depends on Mn(2+) as a cofactor.

It catalyses the reaction D-ribulose 5-phosphate = (2S)-2-hydroxy-3-oxobutyl phosphate + formate + H(+). It participates in cofactor biosynthesis; riboflavin biosynthesis; 2-hydroxy-3-oxobutyl phosphate from D-ribulose 5-phosphate: step 1/1. In terms of biological role, catalyzes the conversion of D-ribulose 5-phosphate to formate and 3,4-dihydroxy-2-butanone 4-phosphate. This chain is 3,4-dihydroxy-2-butanone 4-phosphate synthase, found in Clostridium botulinum (strain ATCC 19397 / Type A).